We begin with the raw amino-acid sequence, 165 residues long: MFSMMNGLQHYGQQALRAARYIGQSFMVTLEHMNRLPITVQYPYEKIIPSERFRGRIHFEFDKCIACEVCVRVCPINLPVVDWELIKSMRKKQLKSYSIDFGVCIFCGNCVEYCPTNCLSMTEEYELATYDRHELNYDQIALSRLPFSIVQDSTIQAHSSLGYLS.

4Fe-4S ferredoxin-type domains follow at residues Gly-55 to Glu-84 and Lys-95 to Glu-124. The [4Fe-4S] cluster site is built by Cys-64, Cys-67, Cys-70, Cys-74, Cys-104, Cys-107, Cys-110, and Cys-114.

It belongs to the complex I 23 kDa subunit family. In terms of assembly, NDH is composed of at least 16 different subunits, 5 of which are encoded in the nucleus. [4Fe-4S] cluster is required as a cofactor.

The protein localises to the plastid. The protein resides in the chloroplast thylakoid membrane. It catalyses the reaction a plastoquinone + NADH + (n+1) H(+)(in) = a plastoquinol + NAD(+) + n H(+)(out). The enzyme catalyses a plastoquinone + NADPH + (n+1) H(+)(in) = a plastoquinol + NADP(+) + n H(+)(out). Its function is as follows. NDH shuttles electrons from NAD(P)H:plastoquinone, via FMN and iron-sulfur (Fe-S) centers, to quinones in the photosynthetic chain and possibly in a chloroplast respiratory chain. The immediate electron acceptor for the enzyme in this species is believed to be plastoquinone. Couples the redox reaction to proton translocation, and thus conserves the redox energy in a proton gradient. The protein is NAD(P)H-quinone oxidoreductase subunit I, chloroplastic of Psilotum nudum (Whisk fern).